Reading from the N-terminus, the 482-residue chain is Probable cytochrome P450 508D1 (482 aa).

A helical transmembrane segment spans residues 1–21; it reads MVYLKNILIFLIIFLINPLVK. Residue Cys-428 coordinates heme.

Belongs to the cytochrome P450 family. Heme serves as cofactor.

The protein localises to the membrane. This chain is Probable cytochrome P450 508D1 (cyp508D1), found in Dictyostelium discoideum (Social amoeba).